Consider the following 320-residue polypeptide: Ribosome biogenesis protein BRX1 homolog 2 (320 aa).

The tract at residues 1 to 40 (MGRKRKHSETEAPAPVKKSDEPAPDRPKRTLLGWKDKSEG) is disordered. The span at 17-40 (KKSDEPAPDRPKRTLLGWKDKSEG) shows a compositional bias: basic and acidic residues. The Brix domain maps to 57 to 260 (EKVLVTCSRR…PIKIFAGSFG (204 aa)). The tract at residues 297–320 (RKKMHELSNPLEPDEFADMWKDDE) is disordered. Acidic residues predominate over residues 308–320 (EPDEFADMWKDDE).

This sequence belongs to the BRX1 family. As to expression, expressed in roots, rosette leaves, stems, flowers, siliques and seeds.

The protein resides in the nucleus. Its subcellular location is the nucleolus. Functionally, involved in pre-rRNA processing and required for biogenesis of the large (60S) ribosomal subunit. Required for proper development. The polypeptide is Ribosome biogenesis protein BRX1 homolog 2 (Arabidopsis thaliana (Mouse-ear cress)).